We begin with the raw amino-acid sequence, 327 residues long: GTPase Obg (327 aa).

The region spanning 2–160 (HLFKDSLNLI…LNLRLELSLI (159 aa)) is the Obg domain. The OBG-type G domain occupies 161–326 (ADVGLVGLPN…LVSEFFSLAK (166 aa)). GTP contacts are provided by residues 167–174 (GLPNAGKS), 192–196 (FTTKI), 213–216 (DLPG), 280–283 (SKLD), and 307–309 (SIY). Mg(2+) is bound by residues Ser-174 and Thr-194.

This sequence belongs to the TRAFAC class OBG-HflX-like GTPase superfamily. OBG GTPase family. As to quaternary structure, monomer. It depends on Mg(2+) as a cofactor.

The protein localises to the cytoplasm. In terms of biological role, an essential GTPase which binds GTP, GDP and possibly (p)ppGpp with moderate affinity, with high nucleotide exchange rates and a fairly low GTP hydrolysis rate. Plays a role in control of the cell cycle, stress response, ribosome biogenesis and in those bacteria that undergo differentiation, in morphogenesis control. This is GTPase Obg from Borrelia recurrentis (strain A1).